Reading from the N-terminus, the 391-residue chain is Elongation factor Tu 1 (391 aa).

Residues 10-201 form the tr-type G domain; that stretch reads KPHVNIGTIG…AVDSYIPTPE (192 aa). Positions 19-26 are G1; that stretch reads GHVDHGKT. 19 to 26 lines the GTP pocket; it reads GHVDHGKT. T26 is a binding site for Mg(2+). The tract at residues 55-59 is G2; sequence GITIS. The G3 stretch occupies residues 76–79; the sequence is DCPG. GTP-binding positions include 76–80 and 131–134; these read DCPGH and NKVD. The G4 stretch occupies residues 131-134; the sequence is NKVD. The segment at 169–171 is G5; it reads SAL.

It belongs to the TRAFAC class translation factor GTPase superfamily. Classic translation factor GTPase family. EF-Tu/EF-1A subfamily. Monomer.

It localises to the cytoplasm. It carries out the reaction GTP + H2O = GDP + phosphate + H(+). GTP hydrolase that promotes the GTP-dependent binding of aminoacyl-tRNA to the A-site of ribosomes during protein biosynthesis. This is Elongation factor Tu 1 from Rhizobium etli (strain ATCC 51251 / DSM 11541 / JCM 21823 / NBRC 15573 / CFN 42).